The primary structure comprises 128 residues: Protein yippee-like At3g08990 (128 aa).

In terms of domain architecture, Yippee spans 12 to 109; the sequence is LVYSCKYCQT…LERFKVLGPY (98 aa). The Zn(2+) site is built by Cys-16, Cys-19, Cys-72, and Cys-75.

Belongs to the yippee family.

The protein is Protein yippee-like At3g08990 of Arabidopsis thaliana (Mouse-ear cress).